A 391-amino-acid chain; its full sequence is Large ribosomal subunit protein uL3 (391 aa).

A compositionally biased stretch (basic and acidic residues) spans 1–10 (MSHRKFEAPR). The disordered stretch occupies residues 1-41 (MSHRKFEAPRHGSLGFRPRRRTRHHRGRCRSFPKDDPSKKP). The segment covering 17 to 31 (RPRRRTRHHRGRCRS) has biased composition (basic residues).

The protein belongs to the universal ribosomal protein uL3 family.

Its subcellular location is the cytoplasm. Functionally, the L3 protein is a component of the large subunit of cytoplasmic ribosomes. This chain is Large ribosomal subunit protein uL3 (RPL3), found in Tetrahymena thermophila.